The following is an 829-amino-acid chain: Probable beta-glucosidase H (829 aa).

Asp225 is an active-site residue. Residues 389–548 enclose the PA14 domain; that stretch reads RMLSNAVIRF…DPEQMVRDAV (160 aa). Residues Asn416, Asn431, Asn473, Asn602, and Asn627 are each glycosylated (N-linked (GlcNAc...) asparagine).

Belongs to the glycosyl hydrolase 3 family.

Its subcellular location is the secreted. It catalyses the reaction Hydrolysis of terminal, non-reducing beta-D-glucosyl residues with release of beta-D-glucose.. It participates in glycan metabolism; cellulose degradation. In terms of biological role, beta-glucosidases are one of a number of cellulolytic enzymes involved in the degradation of cellulosic biomass. Catalyzes the last step releasing glucose from the inhibitory cellobiose. This chain is Probable beta-glucosidase H (bglH), found in Aspergillus clavatus (strain ATCC 1007 / CBS 513.65 / DSM 816 / NCTC 3887 / NRRL 1 / QM 1276 / 107).